A 400-amino-acid chain; its full sequence is Subtilisin-like protease CPC735_047380 (400 aa).

The first 19 residues, 1-19 (MARINVVVSFLAALAVVQA), serve as a signal peptide directing secretion. Residues 20–118 (AQLLNLDGQK…IEPQRTFRAF (99 aa)) constitute a propeptide that is removed on maturation. The Inhibitor I9 domain occupies 35–116 (SYVVVMNDGL…NYIEPQRTFR (82 aa)). In terms of domain architecture, Peptidase S8 spans 128–400 (SWGLGRISHT…DKLLYNGSGQ (273 aa)). The N-linked (GlcNAc...) asparagine glycan is linked to asparagine 153. Catalysis depends on charge relay system residues aspartate 160 and histidine 191. Residues asparagine 244 and asparagine 252 are each glycosylated (N-linked (GlcNAc...) asparagine). Serine 346 (charge relay system) is an active-site residue. Asparagine 396 is a glycosylation site (N-linked (GlcNAc...) asparagine).

Belongs to the peptidase S8 family.

The protein resides in the secreted. Secreted subtilisin-like serine protease with keratinolytic activity that contributes to pathogenicity. The chain is Subtilisin-like protease CPC735_047380 from Coccidioides posadasii (strain C735) (Valley fever fungus).